The following is a 354-amino-acid chain: tRNA N6-adenosine threonylcarbamoyltransferase (354 aa).

2 residues coordinate Fe cation: His-116 and His-120. Substrate is bound by residues 139–143, Asp-172, Gly-185, and Asn-281; that span reads LVSGG. Position 309 (Asp-309) interacts with Fe cation.

It belongs to the KAE1 / TsaD family. Fe(2+) is required as a cofactor.

Its subcellular location is the cytoplasm. It catalyses the reaction L-threonylcarbamoyladenylate + adenosine(37) in tRNA = N(6)-L-threonylcarbamoyladenosine(37) in tRNA + AMP + H(+). Functionally, required for the formation of a threonylcarbamoyl group on adenosine at position 37 (t(6)A37) in tRNAs that read codons beginning with adenine. Is involved in the transfer of the threonylcarbamoyl moiety of threonylcarbamoyl-AMP (TC-AMP) to the N6 group of A37, together with TsaE and TsaB. TsaD likely plays a direct catalytic role in this reaction. The chain is tRNA N6-adenosine threonylcarbamoyltransferase from Parasynechococcus marenigrum (strain WH8102).